A 346-amino-acid polypeptide reads, in one-letter code: D-fructose 1,6-bisphosphatase class 2/sedoheptulose 1,7-bisphosphatase 1 (346 aa).

Mn(2+) is bound by residues Asp33, Glu57, Asp97, and Glu100. Residues 100 to 102, Tyr131, 176 to 178, and 198 to 200 each bind substrate; these read EGT, RAR, and DGD. Glu225 is a Mn(2+) binding site.

It belongs to the FBPase class 2 family. As to quaternary structure, homotetramer. Mn(2+) serves as cofactor.

It carries out the reaction beta-D-fructose 1,6-bisphosphate + H2O = beta-D-fructose 6-phosphate + phosphate. The enzyme catalyses D-sedoheptulose 1,7-bisphosphate + H2O = D-sedoheptulose 7-phosphate + phosphate. It participates in carbohydrate biosynthesis; Calvin cycle. Functionally, catalyzes the hydrolysis of fructose 1,6-bisphosphate (Fru 1,6-P2) and sedoheptulose 1,7-bisphosphate (Sed 1,7-P2) to fructose 6-phosphate and sedoheptulose 7-phosphate, respectively. The protein is D-fructose 1,6-bisphosphatase class 2/sedoheptulose 1,7-bisphosphatase 1 of Acaryochloris marina (strain MBIC 11017).